The primary structure comprises 181 residues: Adenylate kinase (181 aa).

Residue 10–15 (GAGKGT) participates in ATP binding. The segment at 30 to 59 (STGDLFRYNISNGTELGLEAKKYLDAGDLV) is NMP. AMP is bound by residues T31, R36, 57–59 (DLV), 85–88 (GYPR), and Q92. The segment at 126–132 (GRGRDDD) is LID. ATP is bound at residue R127. Positions 129 and 140 each coordinate AMP. G166 contributes to the ATP binding site.

Belongs to the adenylate kinase family. Monomer.

It localises to the cytoplasm. It carries out the reaction AMP + ATP = 2 ADP. It participates in purine metabolism; AMP biosynthesis via salvage pathway; AMP from ADP: step 1/1. Its function is as follows. Catalyzes the reversible transfer of the terminal phosphate group between ATP and AMP. Plays an important role in cellular energy homeostasis and in adenine nucleotide metabolism. This is Adenylate kinase from Mycolicibacterium vanbaalenii (strain DSM 7251 / JCM 13017 / BCRC 16820 / KCTC 9966 / NRRL B-24157 / PYR-1) (Mycobacterium vanbaalenii).